Reading from the N-terminus, the 527-residue chain is Bifunctional methyltransferase (527 aa).

The hemK stretch occupies residues 1-309 (MQYSIKQVLS…GHSRVILFSP (309 aa)). The segment at 1-311 (MQYSIKQVLS…SRVILFSPIN (311 aa)) is RF MTase. Residues 149–153 (GTGSG), aspartate 172, tryptophan 201, asparagine 216, glutamate 356, glutamate 381, asparagine 408, and aspartate 430 each bind S-adenosyl-L-methionine. 216–219 (NPPY) contributes to the substrate binding site. The interval 310-527 (INLNRSYARR…IILQHVSGDH (218 aa)) is tRNA (guanine-N(7)-)-methyltransferase. The tRNA MTase stretch occupies residues 314–527 (RSYARRIGKS…IILQHVSGDH (214 aa)). Residue aspartate 430 is part of the active site. Substrate is bound by residues lysine 434 and aspartate 466.

The protein in the C-terminal section; belongs to the class I-like SAM-binding methyltransferase superfamily. TrmB family. In the N-terminal section; belongs to the protein N5-glutamine methyltransferase family. PrmC subfamily.

The enzyme catalyses L-glutaminyl-[peptide chain release factor] + S-adenosyl-L-methionine = N(5)-methyl-L-glutaminyl-[peptide chain release factor] + S-adenosyl-L-homocysteine + H(+). The catalysed reaction is guanosine(46) in tRNA + S-adenosyl-L-methionine = N(7)-methylguanosine(46) in tRNA + S-adenosyl-L-homocysteine. Its function is as follows. Methylates the class 1 translation termination release factors RF1/PrfA and RF2/PrfB on the glutamine residue of the universally conserved GGQ motif. Catalyzes the formation of N(7)-methylguanine at position 46 (m7G46) in tRNA. The polypeptide is Bifunctional methyltransferase (prmC/trmB) (Rickettsia felis (strain ATCC VR-1525 / URRWXCal2) (Rickettsia azadi)).